We begin with the raw amino-acid sequence, 118 residues long: Large ribosomal subunit protein uL18 (118 aa).

It belongs to the universal ribosomal protein uL18 family. In terms of assembly, part of the 50S ribosomal subunit; part of the 5S rRNA/L5/L18/L25 subcomplex. Contacts the 5S and 23S rRNAs.

Functionally, this is one of the proteins that bind and probably mediate the attachment of the 5S RNA into the large ribosomal subunit, where it forms part of the central protuberance. This Rickettsia felis (strain ATCC VR-1525 / URRWXCal2) (Rickettsia azadi) protein is Large ribosomal subunit protein uL18.